The chain runs to 138 residues: Large ribosomal subunit protein bL17 (138 aa).

This sequence belongs to the bacterial ribosomal protein bL17 family. Part of the 50S ribosomal subunit. Contacts protein L32.

This Jannaschia sp. (strain CCS1) protein is Large ribosomal subunit protein bL17.